A 330-amino-acid polypeptide reads, in one-letter code: Probable WRKY transcription factor 39 (330 aa).

Positions 256–322 (KIADIPPDEY…YEGEHNHSRI (67 aa)) form a DNA-binding region, WRKY.

Its subcellular location is the nucleus. Functionally, transcription factor. Interacts specifically with the W box (5'-(T)TGAC[CT]-3'), a frequently occurring elicitor-responsive cis-acting element. This chain is Probable WRKY transcription factor 39 (WRKY39), found in Arabidopsis thaliana (Mouse-ear cress).